The following is a 342-amino-acid chain: S-adenosylmethionine:tRNA ribosyltransferase-isomerase (342 aa).

This sequence belongs to the QueA family. In terms of assembly, monomer.

The protein localises to the cytoplasm. It carries out the reaction 7-aminomethyl-7-carbaguanosine(34) in tRNA + S-adenosyl-L-methionine = epoxyqueuosine(34) in tRNA + adenine + L-methionine + 2 H(+). Its pathway is tRNA modification; tRNA-queuosine biosynthesis. Transfers and isomerizes the ribose moiety from AdoMet to the 7-aminomethyl group of 7-deazaguanine (preQ1-tRNA) to give epoxyqueuosine (oQ-tRNA). This is S-adenosylmethionine:tRNA ribosyltransferase-isomerase from Moorella thermoacetica (strain ATCC 39073 / JCM 9320).